Consider the following 157-residue polypeptide: Myosin regulatory light chain, striated adductor muscle (157 aa).

2 EF-hand domains span residues 16–51 and 85–120; these read KQIQ…LGRA and DSEE…MGDN. D29, D31, D33, and D40 together coordinate Ca(2+).

In terms of biological role, in molluscan muscle, calcium regulation is associated with myosin rather than with actin. Muscle myosin contains two types of light chains: the catalytic light chain, essential for ATPase activity, and the regulatory light chain, a calcium-binding protein responsible for Ca(2+) dependent binding and Ca(2+) dependent Mg-ATPase activity. This is Myosin regulatory light chain, striated adductor muscle from Argopecten irradians (Bay scallop).